We begin with the raw amino-acid sequence, 525 residues long: Glutamate--cysteine ligase (525 aa).

Belongs to the glutamate--cysteine ligase type 1 family. Type 1 subfamily.

It catalyses the reaction L-cysteine + L-glutamate + ATP = gamma-L-glutamyl-L-cysteine + ADP + phosphate + H(+). It functions in the pathway sulfur metabolism; glutathione biosynthesis; glutathione from L-cysteine and L-glutamate: step 1/2. The chain is Glutamate--cysteine ligase from Alcanivorax borkumensis (strain ATCC 700651 / DSM 11573 / NCIMB 13689 / SK2).